A 591-amino-acid polypeptide reads, in one-letter code: uncharacterized protein (591 aa).

4 consecutive transmembrane segments (helical) span residues 389 to 409 (VYLG…SALI), 411 to 431 (GGSP…GGIL), 538 to 558 (GILP…FALS), and 571 to 591 (PIIS…FNLL).

The protein localises to the membrane. This is an uncharacterized protein from Mycoplasma (Bacteriophage L2).